The chain runs to 559 residues: Putative helicase 22 (559 aa).

The Helicase ATP-binding domain occupies 186–347; sequence VSDVNVIGNG…EIMGLLGKIS (162 aa). 199-206 lines the ATP pocket; that stretch reads APTGSGKS. The DEAH box motif lies at 300–303; it reads DEAH. In terms of domain architecture, Helicase C-terminal spans 410 to 552; that stretch reads TNKQIISKIK…KMNFIENEYN (143 aa).

The chain is Putative helicase 22 (SIFV0022) from Sulfolobus islandicus filamentous virus (isolate Iceland/Hveragerdi) (SIFV).